The following is a 170-amino-acid chain: Shikimate kinase (170 aa).

11-16 (LSGKST) serves as a coordination point for ATP. Ser15 is a Mg(2+) binding site. Substrate contacts are provided by Asp33, Arg57, and Gly79. Arg119 lines the ATP pocket. Arg137 serves as a coordination point for substrate.

The protein belongs to the shikimate kinase family. Monomer. Mg(2+) is required as a cofactor.

The protein resides in the cytoplasm. It carries out the reaction shikimate + ATP = 3-phosphoshikimate + ADP + H(+). The protein operates within metabolic intermediate biosynthesis; chorismate biosynthesis; chorismate from D-erythrose 4-phosphate and phosphoenolpyruvate: step 5/7. Functionally, catalyzes the specific phosphorylation of the 3-hydroxyl group of shikimic acid using ATP as a cosubstrate. The protein is Shikimate kinase of Clostridium botulinum (strain Okra / Type B1).